A 114-amino-acid chain; its full sequence is Probable prefoldin subunit 2 (114 aa).

Belongs to the prefoldin subunit beta family. In terms of assembly, heterohexamer of two PFD-alpha type and four PFD-beta type subunits.

In terms of biological role, binds specifically to cytosolic chaperonin (c-CPN) and transfers target proteins to it. Binds to nascent polypeptide chain and promotes folding in an environment in which there are many competing pathways for nonnative proteins. The sequence is that of Probable prefoldin subunit 2 from Schizosaccharomyces pombe (strain 972 / ATCC 24843) (Fission yeast).